We begin with the raw amino-acid sequence, 731 residues long: 1,4-alpha-glucan branching enzyme GlgB (731 aa).

Asp411 acts as the Nucleophile in catalysis. The active-site Proton donor is Glu464.

This sequence belongs to the glycosyl hydrolase 13 family. GlgB subfamily. As to quaternary structure, monomer.

It carries out the reaction Transfers a segment of a (1-&gt;4)-alpha-D-glucan chain to a primary hydroxy group in a similar glucan chain.. Its pathway is glycan biosynthesis; glycogen biosynthesis. In terms of biological role, catalyzes the formation of the alpha-1,6-glucosidic linkages in glycogen by scission of a 1,4-alpha-linked oligosaccharide from growing alpha-1,4-glucan chains and the subsequent attachment of the oligosaccharide to the alpha-1,6 position. The polypeptide is 1,4-alpha-glucan branching enzyme GlgB (Mycobacterium bovis (strain ATCC BAA-935 / AF2122/97)).